Reading from the N-terminus, the 165-residue chain is Large ribosomal subunit protein uL11A (165 aa).

N5-methylarginine is present on Arg67.

It belongs to the universal ribosomal protein uL11 family. Component of the large ribosomal subunit (LSU). Mature yeast ribosomes consist of a small (40S) and a large (60S) subunit. The 40S small subunit contains 1 molecule of ribosomal RNA (18S rRNA) and at least 33 different proteins. The large 60S subunit contains 3 rRNA molecules (25S, 5.8S and 5S rRNA) and at least 46 different proteins.

Its subcellular location is the cytoplasm. The protein resides in the nucleus. The protein localises to the nucleolus. Functionally, this protein binds directly to 26S ribosomal RNA. Its function is as follows. Component of the ribosome, a large ribonucleoprotein complex responsible for the synthesis of proteins in the cell. The small ribosomal subunit (SSU) binds messenger RNAs (mRNAs) and translates the encoded message by selecting cognate aminoacyl-transfer RNA (tRNA) molecules. The large subunit (LSU) contains the ribosomal catalytic site termed the peptidyl transferase center (PTC), which catalyzes the formation of peptide bonds, thereby polymerizing the amino acids delivered by tRNAs into a polypeptide chain. The nascent polypeptides leave the ribosome through a tunnel in the LSU and interact with protein factors that function in enzymatic processing, targeting, and the membrane insertion of nascent chains at the exit of the ribosomal tunnel. This is Large ribosomal subunit protein uL11A (rpl1201) from Schizosaccharomyces pombe (strain 972 / ATCC 24843) (Fission yeast).